The primary structure comprises 557 residues: Glutamine--tRNA ligase (557 aa).

The 'HIGH' region signature appears at 42 to 52; sequence PEPNGYLHIGH. ATP contacts are provided by residues 43-45 and 49-55; these read EPN and HIGHAKS. 2 residues coordinate L-glutamine: aspartate 75 and tyrosine 220. ATP-binding positions include threonine 239 and 270 to 271; that span reads RL. The 'KMSKS' region signature appears at 277–281; it reads LTSKR.

Belongs to the class-I aminoacyl-tRNA synthetase family. In terms of assembly, monomer.

It is found in the cytoplasm. It carries out the reaction tRNA(Gln) + L-glutamine + ATP = L-glutaminyl-tRNA(Gln) + AMP + diphosphate. The sequence is that of Glutamine--tRNA ligase from Haemophilus influenzae (strain ATCC 51907 / DSM 11121 / KW20 / Rd).